A 380-amino-acid polypeptide reads, in one-letter code: Chaperone protein DnaJ (380 aa).

One can recognise a J domain in the interval 5–70 (DFYDVLGVNR…QKRAAYDQYG (66 aa)). The CR-type zinc-finger motif lies at 139–217 (GCEKQIRIPT…CHGAGRVKSQ (79 aa)). Zn(2+)-binding residues include cysteine 152, cysteine 155, cysteine 169, cysteine 172, cysteine 191, cysteine 194, cysteine 205, and cysteine 208. CXXCXGXG motif repeat units lie at residues 152–159 (CSHCHGSG), 169–176 (CPTCGGAG), 191–198 (CPTCHGSG), and 205–212 (CNICHGAG).

The protein belongs to the DnaJ family. As to quaternary structure, homodimer. It depends on Zn(2+) as a cofactor.

It localises to the cytoplasm. In terms of biological role, participates actively in the response to hyperosmotic and heat shock by preventing the aggregation of stress-denatured proteins and by disaggregating proteins, also in an autonomous, DnaK-independent fashion. Unfolded proteins bind initially to DnaJ; upon interaction with the DnaJ-bound protein, DnaK hydrolyzes its bound ATP, resulting in the formation of a stable complex. GrpE releases ADP from DnaK; ATP binding to DnaK triggers the release of the substrate protein, thus completing the reaction cycle. Several rounds of ATP-dependent interactions between DnaJ, DnaK and GrpE are required for fully efficient folding. Also involved, together with DnaK and GrpE, in the DNA replication of plasmids through activation of initiation proteins. The chain is Chaperone protein DnaJ from Laribacter hongkongensis (strain HLHK9).